We begin with the raw amino-acid sequence, 1313 residues long: Ataxin-2 (1313 aa).

Low complexity predominate over residues 1–12 (MRSAAAAPRSPA). A disordered region spans residues 1–255 (MRSAAAAPRS…RNSNKGLPQS (255 aa)). A compositionally biased stretch (pro residues) spans 48 to 65 (GPYPSAAPPPPGPGPPPS). Composition is skewed to low complexity over residues 104–114 (FVVLLLPLASP), 141–154 (ARPA…ACEP), 166–187 (QQQQ…QQQQ), and 204–234 (LLAS…VAAT). The segment covering 235–244 (SGGGRPGLGR) has biased composition (gly residues). S248 is subject to Phosphoserine. Residues 267–344 (RMVHILTSVV…FVVVQFKDMD (78 aa)) enclose the Sm domain. Residues S393, S466, S478, S508, and S554 each carry the phosphoserine modification. Composition is skewed to basic and acidic residues over residues 459 to 471 (ALEN…EEKY) and 478 to 492 (SSER…RENK). 2 disordered regions span residues 459-954 (ALEN…HQQP) and 1137-1219 (NATL…NSFP). A compositionally biased stretch (polar residues) spans 508–544 (SGRQNSPRMGQPGSGSMPSRSTSHTSDFNPNSGSDQR). Over residues 552–562 (WPSPCPSPSSR) the composition is skewed to pro residues. Residues 563–581 (PPSRYQSGPNSLPPRAATP) are compositionally biased toward low complexity. The span at 582 to 598 (TRPPSRPPSRPSRPPSH) shows a compositional bias: pro residues. The residue at position 624 (S624) is a Phosphoserine. The segment covering 627-637 (AQRHPRNHRVS) has biased composition (basic residues). Residue R640 is modified to Asymmetric dimethylarginine; alternate. Residue R640 is modified to Omega-N-methylarginine; alternate. Residue S642 is modified to Phosphoserine. Residues 666–681 (TSPSGGTWSSVVSGVP) show a composition bias toward low complexity. A Phosphoserine modification is found at S684. The span at 693–703 (PRQNSIGNTPS) shows a compositional bias: polar residues. S728 carries the phosphoserine modification. The residue at position 741 (T741) is a Phosphothreonine. The span at 768-777 (PNETSPSFSK) shows a compositional bias: polar residues. A phosphoserine mark is found at S772 and S784. Over residues 788-804 (SEHRKQIDDLKKFKNDF) the composition is skewed to basic and acidic residues. Polar residues predominate over residues 807 to 820 (QPSSTSESMDQLLN). Residues 821-844 (KNREGEKSRDLIKDKIEPSAKDSF) are compositionally biased toward basic and acidic residues. Residues 847-871 (NSSSNCTSGSSKPNSPSISPSILSN) are compositionally biased toward low complexity. Residues S856, S857, S861, S865, S867, S888, and S889 each carry the phosphoserine modification. Polar residues predominate over residues 880–891 (VTSQGVQTSSPA). Residue K893 forms a Glycyl lysine isopeptide (Lys-Gly) (interchain with G-Cter in SUMO2) linkage. Basic and acidic residues predominate over residues 893 to 910 (KQEKDDKEEKKDAAEQVR). Composition is skewed to low complexity over residues 925 to 936 (SFSQPKPSTTPT) and 1155 to 1192 (GQQQ…QQSA). Residues 1206–1219 (TPASNTQSPQNSFP) show a composition bias toward polar residues.

This sequence belongs to the ataxin-2 family. In terms of assembly, monomer. Can also form homodimers. Interacts with TARDBP; the interaction is RNA-dependent. Interacts with RBFOX1. Interacts with polyribosomes. Interacts with SH3GL2 and SH3GL3. Interacts with SH3KBP1 and CBL. Interacts with EGFR. Interacts with ATXN2L. Expressed in the brain, heart, liver, skeletal muscle, pancreas and placenta. Isoform 1 is predominant in the brain and spinal cord. Isoform 4 is more abundant in the cerebellum. In the brain, broadly expressed in the amygdala, caudate nucleus, corpus callosum, hippocampus, hypothalamus, substantia nigra, subthalamic nucleus and thalamus.

It localises to the cytoplasm. Functionally, involved in EGFR trafficking, acting as negative regulator of endocytic EGFR internalization at the plasma membrane. This Homo sapiens (Human) protein is Ataxin-2 (ATXN2).